Reading from the N-terminus, the 389-residue chain is Gustatory receptor 68a (389 aa).

The Cytoplasmic portion of the chain corresponds to 1–42 (MKIYQDIYPISKPSQIFAILPFYSGDVDDGFRFGGLGRWYGR). Residues 43-63 (LVALIILIGSLTLGEDVLFAS) form a helical membrane-spanning segment. Over 64–82 (KEYRLVASAQGDTEEINRT) the chain is Extracellular. Residue Asn-80 is glycosylated (N-linked (GlcNAc...) asparagine). Residues 83–103 (IETLLCIISYTMVVLSSVQNA) form a helical membrane-spanning segment. The Cytoplasmic portion of the chain corresponds to 104 to 133 (SRHFRTLHDIAKIDEYLLANGFRETYSCRN). The helical transmembrane segment at 134–154 (LTILVTSAAGGVLAVAFYYIH) threads the bilayer. The Extracellular segment spans residues 155–164 (YRSGIGAKRQ). Residues 165–185 (IILLLIYFLQLLYSTLLALYL) form a helical membrane-spanning segment. Over 186–236 (RTLMMNLAQRIGFLNQKLDTFNLQDCGHMENWRELSNLIEVLCKFRYITEN) the chain is Cytoplasmic. A helical membrane pass occupies residues 237–257 (INCVAGVSLLFYFGFSFYTVT). N-linked (GlcNAc...) asparagine glycosylation is present at Asn-258. At 258–281 (NQSYLAFATLTAGSLSSKTEVADT) the chain is on the extracellular side. A helical membrane pass occupies residues 282–302 (IGLSCIWVLAETITMIVICSA). The Cytoplasmic segment spans residues 303–352 (CDGLASEVNGTAQILARIYGKSKQFQNLIDKFLTKSIKQDLQFTAYGFFS). The chain crosses the membrane as a helical span at residues 353–373 (IDNSTLFKIFSAVTTYLVILI). Residues 374 to 389 (QFKQLEDSKVEDISQA) lie on the Extracellular side of the membrane.

It belongs to the insect chemoreceptor superfamily. Gustatory receptor (GR) family. Gr21a subfamily. As to expression, expressed in chemosensory neurons of about 20 male-specific gustatory bristles in the forelegs. No expression is seen in the mechanosensory neurons. In larvae, expressed in the ventral pharyngeal sense organ.

It localises to the cell membrane. In terms of biological role, dsx-dependent essential component of pheromone-driven courtship behavior. Recognizes a female pheromone involved in the second step (tapping step) of the courtship display which is essential for efficient execution of the entire courtship sequence and timely mating. Required for detection of the male sex pheromone CH503 which is transferred from males to females during mating and inhibits courtship behavior by other males. Gr68a-expressing neurons in the male foreleg relay signals to the suboesophageal zone (SEZ) and courtship suppression is mediated by the release of the neuropeptide tachykinin from a cluster of 8-10 neurons in the SEZ. This is Gustatory receptor 68a (Gr68a) from Drosophila melanogaster (Fruit fly).